Consider the following 316-residue polypeptide: Phosphate acyltransferase (316 aa).

Belongs to the PlsX family. As to quaternary structure, homodimer. Probably interacts with PlsY.

It is found in the cytoplasm. The catalysed reaction is a fatty acyl-[ACP] + phosphate = an acyl phosphate + holo-[ACP]. It participates in lipid metabolism; phospholipid metabolism. Catalyzes the reversible formation of acyl-phosphate (acyl-PO(4)) from acyl-[acyl-carrier-protein] (acyl-ACP). This enzyme utilizes acyl-ACP as fatty acyl donor, but not acyl-CoA. The chain is Phosphate acyltransferase from Chlamydia caviae (strain ATCC VR-813 / DSM 19441 / 03DC25 / GPIC) (Chlamydophila caviae).